The chain runs to 410 residues: Translation initiation factor 2 subunit gamma (410 aa).

The tr-type G domain maps to glutamine 6–glutamate 203. The interval glycine 15–threonine 22 is G1. The Mg(2+) site is built by aspartate 18, threonine 22, glycine 43, and serine 45. Residue aspartate 18–serine 23 participates in GTP binding. A G2 region spans residues glycine 43–arginine 47. Cysteine 58, cysteine 61, cysteine 73, and cysteine 76 together coordinate Zn(2+). The tract at residues aspartate 90–glycine 93 is G3. GTP-binding positions include asparagine 146–aspartate 149 and serine 181–histidine 183. The G4 stretch occupies residues asparagine 146 to aspartate 149. The interval serine 181–histidine 183 is G5.

This sequence belongs to the TRAFAC class translation factor GTPase superfamily. Classic translation factor GTPase family. EIF2G subfamily. Heterotrimer composed of an alpha, a beta and a gamma chain. Mg(2+) serves as cofactor.

The enzyme catalyses GTP + H2O = GDP + phosphate + H(+). In terms of biological role, eIF-2 functions in the early steps of protein synthesis by forming a ternary complex with GTP and initiator tRNA. The sequence is that of Translation initiation factor 2 subunit gamma from Methanococcus aeolicus (strain ATCC BAA-1280 / DSM 17508 / OCM 812 / Nankai-3).